Consider the following 412-residue polypeptide: 3,4-dihydroxybenzoate--[aryl-carrier protein] ligase (412 aa).

It belongs to the ATP-dependent AMP-binding enzyme family.

The catalysed reaction is holo-[aryl-carrier protein] + 3,4-dihydroxybenzoate + ATP = 3,4-dihydroxybenzoyl-[aryl-carrier protein] + AMP + diphosphate. It catalyses the reaction 3,4-dihydroxybenzoate + ATP + H(+) = 3,4-dihydroxybenzoyl-5'-AMP + diphosphate. The enzyme catalyses 3,4-dihydroxybenzoyl-5'-AMP + holo-[aryl-carrier protein] = 3,4-dihydroxybenzoyl-[aryl-carrier protein] + AMP + H(+). Its pathway is siderophore biosynthesis; petrobactin biosynthesis. With respect to regulation, ATP-pyrophosphate exchange is inhibited in vitro by nonhydrolyzable acylsulfamate analogs that mimic the AsbC-bound intermediate 3,4-dihydroxybenzoyl-AMP. Functionally, involved in the biosynthesis of petrobactin, a catecholate siderophore that functions in both iron acquisition and virulence. Catalyzes the adenylation of 3,4-dihydroxybenzoate (3,4-DHBA) to the corresponding AMP ester, followed by the transfer of the activated unit to the phosphopantetheine thiol of the aryl-carrier protein AsbD. The chain is 3,4-dihydroxybenzoate--[aryl-carrier protein] ligase from Bacillus anthracis.